The chain runs to 151 residues: Protein SprT-like (151 aa).

One can recognise a SprT-like domain in the interval 7-147 (QKLTESISES…GKCKGKLHLH (141 aa)). A Zn(2+)-binding site is contributed by His-67. Glu-68 is a catalytic residue. Residue His-71 participates in Zn(2+) binding.

It belongs to the SprT family. Requires Zn(2+) as cofactor.

The protein localises to the cytoplasm. This is Protein SprT-like from Staphylococcus carnosus (strain TM300).